A 373-amino-acid chain; its full sequence is L-threonine 3-dehydrogenase, mitochondrial (373 aa).

Residues 62 to 67 (GGLGQL), 88 to 90 (DIR), 106 to 107 (NI), Tyr195, Lys199, and Ile225 each bind NAD(+). Tyr195 (proton donor/acceptor) is an active-site residue.

It belongs to the NAD(P)-dependent epimerase/dehydratase family. Homodimer.

The protein localises to the mitochondrion. It carries out the reaction L-threonine + NAD(+) = (2S)-2-amino-3-oxobutanoate + NADH + H(+). It functions in the pathway amino-acid degradation; L-threonine degradation via oxydo-reductase pathway; glycine from L-threonine: step 1/2. Functionally, catalyzes the NAD(+)-dependent oxidation of L-threonine to 2-amino-3-ketobutyrate, mediating L-threonine catabolism. The chain is L-threonine 3-dehydrogenase, mitochondrial from Mus musculus (Mouse).